The chain runs to 173 residues: Endoribonuclease YbeY (173 aa).

Residues H126, H130, and H136 each coordinate Zn(2+).

The protein belongs to the endoribonuclease YbeY family. Requires Zn(2+) as cofactor.

The protein localises to the cytoplasm. Functionally, single strand-specific metallo-endoribonuclease involved in late-stage 70S ribosome quality control and in maturation of the 3' terminus of the 16S rRNA. The polypeptide is Endoribonuclease YbeY (Sinorhizobium fredii (strain NBRC 101917 / NGR234)).